A 187-amino-acid chain; its full sequence is Putative manganese efflux pump MntP (187 aa).

6 helical membrane-spanning segments follow: residues 3-23, 35-55, 56-76, 107-127, 129-149, and 166-186; these read FYSLIFLSCALGMDAFAVSLC, HYLIVGIYFGGFQALMPTIGY, FIGITFASFIASIDHWIAFIL, LALAIATSIDALAVGVSFAFL, VNLLLAIFLIGIITFILCIIA, and LLGGLVLIILGVKILIEHLFF.

It belongs to the MntP (TC 9.B.29) family.

It localises to the cell inner membrane. Probably functions as a manganese efflux pump. The polypeptide is Putative manganese efflux pump MntP (Campylobacter jejuni (strain RM1221)).